Reading from the N-terminus, the 240-residue chain is tRNA (guanine-N(1)-)-methyltransferase (240 aa).

Residues G108 and 127 to 132 contribute to the S-adenosyl-L-methionine site; that span reads LGDFIL.

It belongs to the RNA methyltransferase TrmD family. Homodimer.

Its subcellular location is the cytoplasm. The catalysed reaction is guanosine(37) in tRNA + S-adenosyl-L-methionine = N(1)-methylguanosine(37) in tRNA + S-adenosyl-L-homocysteine + H(+). Its function is as follows. Specifically methylates guanosine-37 in various tRNAs. The polypeptide is tRNA (guanine-N(1)-)-methyltransferase (Streptococcus mutans serotype c (strain ATCC 700610 / UA159)).